Here is a 151-residue protein sequence, read N- to C-terminus: MFRGIHQVSVDAKGRMSLPARLRDDLAQYDDDGVVVTIDPVSRCLLLYPLSEWELIQQKLDKLPTFQPQARRLQRLLVGHATDLEVDKAGRILLPAPLREFARLDKKLTILGQGKKLEIWSQEEWEAQREDYLSQDALEDLQTETMMDISL.

2 SpoVT-AbrB domains span residues Ile-5–Glu-52 and Ala-81–Glu-124.

It belongs to the MraZ family. In terms of assembly, forms oligomers.

Its subcellular location is the cytoplasm. The protein localises to the nucleoid. This is Transcriptional regulator MraZ from Marinomonas sp. (strain MWYL1).